The chain runs to 504 residues: ATP synthase subunit alpha (504 aa).

Residue 171 to 178 (GDRATGKT) participates in ATP binding.

Belongs to the ATPase alpha/beta chains family. As to quaternary structure, F-type ATPases have 2 components, CF(1) - the catalytic core - and CF(0) - the membrane proton channel. CF(1) has five subunits: alpha(3), beta(3), gamma(1), delta(1), epsilon(1). CF(0) has three main subunits: a(1), b(2) and c(9-12). The alpha and beta chains form an alternating ring which encloses part of the gamma chain. CF(1) is attached to CF(0) by a central stalk formed by the gamma and epsilon chains, while a peripheral stalk is formed by the delta and b chains.

The protein localises to the cell inner membrane. The catalysed reaction is ATP + H2O + 4 H(+)(in) = ADP + phosphate + 5 H(+)(out). Its function is as follows. Produces ATP from ADP in the presence of a proton gradient across the membrane. The alpha chain is a regulatory subunit. The protein is ATP synthase subunit alpha of Sulfurihydrogenibium sp. (strain YO3AOP1).